The chain runs to 222 residues: Large ribosomal subunit protein uL1 (222 aa).

It belongs to the universal ribosomal protein uL1 family. In terms of assembly, part of the 50S ribosomal subunit.

In terms of biological role, binds directly to 23S rRNA. Probably involved in E site tRNA release. Functionally, protein L1 is also a translational repressor protein, it controls the translation of its operon by binding to its mRNA. The chain is Large ribosomal subunit protein uL1 from Pyrobaculum calidifontis (strain DSM 21063 / JCM 11548 / VA1).